We begin with the raw amino-acid sequence, 138 residues long: MSGTLLAFDFGTKSIGVAVGQRITGTARPLPAIKAQDGTPDWNLIERLLKEWQPDEIIVGLPLNMDGTEQPLTARARKFANRIHGRFGVEVKLHDERLSTVEARSGLFEQGGYRALNKGKIDSASAVIILESYFEQGY.

This sequence belongs to the YqgF nuclease family.

The protein resides in the cytoplasm. Functionally, could be a nuclease involved in processing of the 5'-end of pre-16S rRNA. In Escherichia coli O157:H7, this protein is Putative pre-16S rRNA nuclease.